The following is a 519-amino-acid chain: 2-isopropylmalate synthase (519 aa).

One can recognise a Pyruvate carboxyltransferase domain in the interval 12-274; sequence VVIFDTTLRD…WCNVESTTLT (263 aa). Mn(2+) is bound by residues Asp-21, His-209, His-211, and Asn-245. The tract at residues 398-519 is regulatory domain; that stretch reads RLVSLTVIAG…QREAPVAAAS (122 aa).

It belongs to the alpha-IPM synthase/homocitrate synthase family. LeuA type 1 subfamily. In terms of assembly, homodimer. It depends on Mn(2+) as a cofactor.

It localises to the cytoplasm. It catalyses the reaction 3-methyl-2-oxobutanoate + acetyl-CoA + H2O = (2S)-2-isopropylmalate + CoA + H(+). It participates in amino-acid biosynthesis; L-leucine biosynthesis; L-leucine from 3-methyl-2-oxobutanoate: step 1/4. Its function is as follows. Catalyzes the condensation of the acetyl group of acetyl-CoA with 3-methyl-2-oxobutanoate (2-ketoisovalerate) to form 3-carboxy-3-hydroxy-4-methylpentanoate (2-isopropylmalate). In Afipia carboxidovorans (strain ATCC 49405 / DSM 1227 / KCTC 32145 / OM5) (Oligotropha carboxidovorans), this protein is 2-isopropylmalate synthase.